We begin with the raw amino-acid sequence, 104 residues long: Large ribosomal subunit protein uL24 (104 aa).

It belongs to the universal ribosomal protein uL24 family. As to quaternary structure, part of the 50S ribosomal subunit.

One of two assembly initiator proteins, it binds directly to the 5'-end of the 23S rRNA, where it nucleates assembly of the 50S subunit. Its function is as follows. One of the proteins that surrounds the polypeptide exit tunnel on the outside of the subunit. This Pectobacterium carotovorum subsp. carotovorum (strain PC1) protein is Large ribosomal subunit protein uL24.